We begin with the raw amino-acid sequence, 135 residues long: Large ribosomal subunit protein uL16c (135 aa).

Over residues 1–23 (MLSPKKTKFRKEHRGRMKGRSSR) the composition is skewed to basic residues. Residues 1-24 (MLSPKKTKFRKEHRGRMKGRSSRG) are disordered.

The protein belongs to the universal ribosomal protein uL16 family. Part of the 50S ribosomal subunit.

The protein resides in the plastid. It is found in the chloroplast. In Pelargonium hortorum (Common geranium), this protein is Large ribosomal subunit protein uL16c.